The primary structure comprises 498 residues: Myocyte-specific enhancer factor 2D homolog (498 aa).

The tract at residues 1 to 100 (MGRKKIQIQR…KGFNGCDSPE (100 aa)) is interaction with hdac9. The MADS-box domain occupies 3–57 (RKKIQIQRITDERNRQVTFTKRKFGLMKKAYELSVLCDCEIALIIFNHSNKLFQY). Positions 58–86 (ASTDMDKVLLKYTEYNEPHESRTNADIIE) form a DNA-binding region, mef2-type. Disordered stretches follow at residues 173-215 (LTDP…NSNG), 243-267 (LGKV…NSRK), and 411-498 (SIKR…AWVT). A compositionally biased stretch (basic and acidic residues) spans 412 to 424 (IKREPASPNRERS). Composition is skewed to polar residues over residues 425-434 (TGTPLSCFSH) and 447-457 (DSLSSNASSFE).

Belongs to the MEF2 family. In terms of assembly, binds DNA as a multimer, probably as a dimer. Interacts with hdac9. As to expression, restricted to the somitic mesoderm of early embryos and to the body muscle (myotomes) of the tadpole. Expressed in all tissues examined in the adult.

The protein localises to the nucleus. May regulate muscle-specific transcription in the embryo and may regulate transcription of a variety of cell types in the adult. It binds to the sequence 5'-CTA[TA]4TAR-3'. This is Myocyte-specific enhancer factor 2D homolog (mef2d) from Xenopus laevis (African clawed frog).